A 118-amino-acid polypeptide reads, in one-letter code: uncharacterized protein (118 aa).

This is an uncharacterized protein from Escherichia coli (strain UTI89 / UPEC).